A 199-amino-acid polypeptide reads, in one-letter code: Guanylyl cyclase-activating protein 1 (199 aa).

A lipid anchor (N-myristoyl glycine) is attached at Gly2. At Asn3 the chain carries Deamidated asparagine. 4 consecutive EF-hand domains span residues 13–48 (SATE…KNLS), 50–85 (SANK…VLKG), 86–121 (KVDQ…IRAI), and 129–164 (TAEE…DEVL). The Ca(2+) site is built by Asp63, Asn65, Asp67, Tyr69, Glu74, Asp99, Asp101, Asn103, Cys105, Glu110, Asp142, Asn144, Asp146, Glu148, and Glu153.

Retina, in rod and cone outer segments, and pineal gland.

Its function is as follows. Stimulates retinal guanylyl cyclase when free calcium ions concentration is low and inhibits guanylyl cyclase when free calcium ions concentration is elevated. This Ca(2+)-sensitive regulation of retinal guanylyl cyclase is a key event in recovery of the dark state of rod photoreceptors following light exposure. The polypeptide is Guanylyl cyclase-activating protein 1 (GUCA1A) (Gallus gallus (Chicken)).